Reading from the N-terminus, the 160-residue chain is MKTRIIFAALALAAAMPLLVSGVFAADGAAPAKVPSGPHPITQEIPADPMAKEITDDHKRARNYADQPPLIPHAIRDYQIDLNINKCMTCHDRKNTEGSQAPMISVTHFQDRDGQTLGAVSPRRYFCTQCHVPQTDAQPITGNRFRDIDSILAGGKEGAK.

The signal sequence occupies residues 1–25; it reads MKTRIIFAALALAAAMPLLVSGVFA. Heme c-binding residues include His73, Cys87, Cys90, His91, His108, Cys127, Cys130, and His131.

Belongs to the NapB family. Component of the periplasmic nitrate reductase NapAB complex composed of NapA and NapB. Binds 2 heme C groups per subunit.

Its subcellular location is the periplasm. In terms of biological role, electron transfer subunit of the periplasmic nitrate reductase complex NapAB. Receives electrons from the membrane-anchored tetraheme c-type NapC protein and transfers these to NapA subunit, thus allowing electron flow between membrane and periplasm. Essential for periplasmic nitrate reduction with nitrate as the terminal electron acceptor. This Azospirillum brasilense protein is Periplasmic nitrate reductase, electron transfer subunit.